Reading from the N-terminus, the 464-residue chain is Keratin, type I cytoskeletal 28 (464 aa).

A head region spans residues 1-85 (MSLQFSNGSR…GSEGGLLSGN (85 aa)). A coil 1A region spans residues 86 to 121 (EKVTMQNLNDRLASYLDNVRALEEANAELERKIKGW). In terms of domain architecture, IF rod spans 86-401 (EKVTMQNLND…RLIDGDGNSC (316 aa)). The tract at residues 122–143 (YEKYGPGSCRGLDHDYSRYHLT) is linker 1. The tract at residues 144–235 (IEDLKNKIIS…KNHEEEMKAL (92 aa)) is coil 1B. The linker 12 stretch occupies residues 236–258 (QCAAGGNVNVEMNAAPGVDLAVL). Positions 259-397 (LNNMRAEYEA…ETYCRLIDGD (139 aa)) are coil 2. The tract at residues 398-464 (GNSCSKSKGF…NGKTEQRVPF (67 aa)) is tail. The segment at 443-464 (IHSIEEKTSKMTNGKTEQRVPF) is disordered.

It belongs to the intermediate filament family. Heterotetramer of two type I and two type II keratins. Strongly expressed in skin and scalp, and weak expression observed in thymus. In the hair follicle, expressed in Henle layer, Huxley layer and in the irs cuticle. Expression extends from the bulb region up to the point of differentiation into the three layers. Also present in the medulla of beard hair (at protein level).

The protein resides in the cytoplasm. Functionally, essential for the proper assembly of types I and II keratin protein complexes and the formation of keratin intermediate filaments in the inner root sheath (irs). The polypeptide is Keratin, type I cytoskeletal 28 (Homo sapiens (Human)).